A 287-amino-acid chain; its full sequence is MAFSPNVLLGGRVCAAVARSGFATRRVTIPGSTSREPDPDFDWEPEERELQEVESALKRQKKAIRFQKIRRQMEASGAPPRTLTWEAMEQIRYLHREFSESWSVPRLAEGFDVSTDVIRRVLKSKFIPTLEQKLKQDQKVLKKIGLARSIPELPGPGDSSKPLSAGQSVSGSLLIPGDEASSRGHGHSTALKAIELNTQSTNITTRQTERNKGVQGLEEGKDFVPVAAGHPTSTCRGARGIDSDGLPSDKRLEELKAGEAGDQIFSKRVVQRGREFFDSNGNFLYRI.

The signal sequence occupies residues 1 to 23 (MAFSPNVLLGGRVCAAVARSGFA). The interval 149-169 (SIPELPGPGDSSKPLSAGQSV) is disordered. A glycan (N-linked (GlcNAc...) asparagine) is linked at asparagine 202.

This sequence belongs to the neugrin family. As to quaternary structure, forms a regulatory protein-RNA complex, consisting of RCC1L, NGRN, RPUSD3, RPUSD4, TRUB2, FASTKD2 and 16S mt-rRNA. Interacts with 16S mt-rRNA; this interaction is direct.

It localises to the nucleus. The protein localises to the secreted. Its subcellular location is the mitochondrion membrane. Functionally, plays an essential role in mitochondrial ribosome biogenesis. As a component of a functional protein-RNA module, consisting of RCC1L, NGRN, RPUSD3, RPUSD4, TRUB2, FASTKD2 and 16S mitochondrial ribosomal RNA (16S mt-rRNA), controls 16S mt-rRNA abundance and is required for intra-mitochondrial translation of core subunits of the oxidative phosphorylation system. This is Neugrin (NGRN) from Bos taurus (Bovine).